Here is a 278-residue protein sequence, read N- to C-terminus: MQIMLCAISNIASGNCSEDCKYCTQSAHVKTDIQKYRRKELSQIVLEAKMAKKNEALGFCLVTAGLGLDDEKLEYVCEAAKAVQKEVPNLLLIACNGMASVEQLKELKKAGIFSYNHNLETSKEFFPQICTTHTWESRFQTNLNAKEAGLMLCCGGIYGMGESEEDRLSFRKSLQELQPFSTPINFFIANENLKLQVPRLSADEALKIVRDTKEALPQSVVMVAGGREVVLQERQYEIFQAGAGAIVIGDYLTTKGEEPSQDIIKLKEMGFTFASECH.

The region spanning Met1–Arg227 is the Radical SAM core domain. Positions 16, 20, and 23 each coordinate [4Fe-4S] cluster. Residues Cys60, Cys95, and Cys153 each contribute to the [2Fe-2S] cluster site.

This sequence belongs to the radical SAM superfamily. Biotin synthase family. As to quaternary structure, homodimer. [4Fe-4S] cluster is required as a cofactor. The cofactor is [2Fe-2S] cluster.

The enzyme catalyses (4R,5S)-dethiobiotin + (sulfur carrier)-SH + 2 reduced [2Fe-2S]-[ferredoxin] + 2 S-adenosyl-L-methionine = (sulfur carrier)-H + biotin + 2 5'-deoxyadenosine + 2 L-methionine + 2 oxidized [2Fe-2S]-[ferredoxin]. It participates in cofactor biosynthesis; biotin biosynthesis; biotin from 7,8-diaminononanoate: step 2/2. Its function is as follows. Catalyzes the conversion of dethiobiotin (DTB) to biotin by the insertion of a sulfur atom into dethiobiotin via a radical-based mechanism. In Campylobacter jejuni subsp. jejuni serotype O:6 (strain 81116 / NCTC 11828), this protein is Biotin synthase.